The sequence spans 290 residues: Inorganic pyrophosphatase (290 aa).

Position 81 (arginine 81) interacts with diphosphate. Positions 118, 123, and 155 each coordinate Mg(2+).

The protein belongs to the PPase family. Requires Mg(2+) as cofactor.

It is found in the cytoplasm. It catalyses the reaction diphosphate + H2O = 2 phosphate + H(+). The polypeptide is Inorganic pyrophosphatase (ipp-1) (Neurospora crassa (strain ATCC 24698 / 74-OR23-1A / CBS 708.71 / DSM 1257 / FGSC 987)).